Here is a 700-residue protein sequence, read N- to C-terminus: Acetyl-coenzyme A carboxylase carboxyl transferase subunit beta, chloroplastic (700 aa).

Zn(2+) contacts are provided by Cys34, Cys37, Cys53, and Cys56. A C4-type zinc finger spans residues 34-56; the sequence is CENCETLIYKKSLLEQKGVCAEC. Residues 445 to 700 enclose the CoA carboxyltransferase N-terminal domain; it reads KKGRDTKDTE…ETIEIYMYGD (256 aa).

Belongs to the AccD/PCCB family. Acetyl-CoA carboxylase is a heterohexamer composed of biotin carboxyl carrier protein, biotin carboxylase and 2 subunits each of ACCase subunit alpha and ACCase plastid-coded subunit beta (accD). Zn(2+) is required as a cofactor.

It localises to the plastid. The protein resides in the chloroplast stroma. It catalyses the reaction N(6)-carboxybiotinyl-L-lysyl-[protein] + acetyl-CoA = N(6)-biotinyl-L-lysyl-[protein] + malonyl-CoA. Its pathway is lipid metabolism; malonyl-CoA biosynthesis; malonyl-CoA from acetyl-CoA: step 1/1. Component of the acetyl coenzyme A carboxylase (ACC) complex. Biotin carboxylase (BC) catalyzes the carboxylation of biotin on its carrier protein (BCCP) and then the CO(2) group is transferred by the transcarboxylase to acetyl-CoA to form malonyl-CoA. This Cryptomeria japonica (Japanese cedar) protein is Acetyl-coenzyme A carboxylase carboxyl transferase subunit beta, chloroplastic.